Reading from the N-terminus, the 182-residue chain is Putative manganese efflux pump MntP (182 aa).

Helical transmembrane passes span 6–26 (LIPL…VSLG), 37–57 (ILYI…IGMV), 71–91 (HFAG…SSIL), 101–121 (IGIS…SVGL), 131–151 (IITI…GLFI), and 162–182 (YGEI…LFPI).

Belongs to the MntP (TC 9.B.29) family.

The protein localises to the cell membrane. Its function is as follows. Probably functions as a manganese efflux pump. The chain is Putative manganese efflux pump MntP from Bacillus cereus (strain ATCC 10987 / NRS 248).